Consider the following 87-residue polypeptide: MSEIKKVVRTLTGRVVSDKMNKTVTVLVERRVKHPVIGKVIRMSKKYHAHDENNECHEGDTVQIEESRKLSRTKAWTVSKLVERARV.

Belongs to the universal ribosomal protein uS17 family. As to quaternary structure, part of the 30S ribosomal subunit.

In terms of biological role, one of the primary rRNA binding proteins, it binds specifically to the 5'-end of 16S ribosomal RNA. This chain is Small ribosomal subunit protein uS17, found in Thiobacillus denitrificans (strain ATCC 25259 / T1).